Here is a 508-residue protein sequence, read N- to C-terminus: WD repeat-containing protein JIP5 (508 aa).

6 WD repeats span residues 62–105, 106–145, 149–188, 193–233, 253–294, and 345–382; these read EARK…WRTK, RHKG…VVKK, DGGS…TKNT, HGGD…MKQP, DQED…LEDQ, and SGLD…NSDS. Positions 376-508 are disordered; it reads KEENSDSDSD…SHGITKFDGL (133 aa). Over residues 380 to 393 the composition is skewed to acidic residues; that stretch reads SDSDSDSDINDDSE. Residues 407–419 are compositionally biased toward low complexity; the sequence is ELGSGSESEVESD. The stretch at 431–472 is one WD 7 repeat; it reads CTGSDLPGDIEGSEGENNSNDDDNHDDREELWKELDQPTSDE. Acidic residues predominate over residues 441 to 454; the sequence is EGSEGENNSNDDDN. Residues 455–466 show a composition bias toward basic and acidic residues; it reads HDDREELWKELD. Positions 478-492 are enriched in basic residues; it reads KRSLKVKDKKNKKFK.

Belongs to the WD repeat WDR55 family.

The protein resides in the nucleus. It localises to the nucleolus. The polypeptide is WD repeat-containing protein JIP5 (JIP5) (Candida glabrata (strain ATCC 2001 / BCRC 20586 / JCM 3761 / NBRC 0622 / NRRL Y-65 / CBS 138) (Yeast)).